Here is a 389-residue protein sequence, read N- to C-terminus: Phospho-N-acetylmuramoyl-pentapeptide-transferase (389 aa).

10 consecutive transmembrane segments (helical) span residues 25–45, 73–93, 97–117, 135–155, 190–210, 222–242, 258–278, 286–306, 311–331, and 366–386; these read RAVM…PWVI, TMGG…WGDL, FIWI…VDDY, FWQS…VSEA, ISYP…IVGA, GLVI…AYVM, GAGE…AFLW, VFMG…VAVI, IVLF…MLQV, and QVVV…LSTL.

This sequence belongs to the glycosyltransferase 4 family. MraY subfamily. Mg(2+) serves as cofactor.

It is found in the cell inner membrane. It catalyses the reaction UDP-N-acetyl-alpha-D-muramoyl-L-alanyl-gamma-D-glutamyl-meso-2,6-diaminopimeloyl-D-alanyl-D-alanine + di-trans,octa-cis-undecaprenyl phosphate = di-trans,octa-cis-undecaprenyl diphospho-N-acetyl-alpha-D-muramoyl-L-alanyl-D-glutamyl-meso-2,6-diaminopimeloyl-D-alanyl-D-alanine + UMP. The protein operates within cell wall biogenesis; peptidoglycan biosynthesis. Functionally, catalyzes the initial step of the lipid cycle reactions in the biosynthesis of the cell wall peptidoglycan: transfers peptidoglycan precursor phospho-MurNAc-pentapeptide from UDP-MurNAc-pentapeptide onto the lipid carrier undecaprenyl phosphate, yielding undecaprenyl-pyrophosphoryl-MurNAc-pentapeptide, known as lipid I. This is Phospho-N-acetylmuramoyl-pentapeptide-transferase from Burkholderia pseudomallei (strain 1106a).